A 258-amino-acid chain; its full sequence is SMH class II histocompatibility antigen, beta-1 chain (258 aa).

Residues 1–29 form the signal peptide; that stretch reads MMVLPVPVAPWTAALTVLLMVLNKSVVQG. Residues 30–121 are beta-1; it reads RTTPENYLFR…LNQRLSQSLI (92 aa). Residues 30-225 are Extracellular-facing; sequence RTTPENYLFR…RAQSDSARNK (196 aa). 2 disulfides stabilise this stretch: cysteine 44–cysteine 106 and cysteine 144–cysteine 200. The segment at 122-215 is beta-2; that stretch reads AQPKVHVSPS…SLDRPITVEW (94 aa). An Ig-like C1-type domain is found at 124-212; sequence PKVHVSPSKG…EHPSLDRPIT (89 aa). The interval 216–225 is connecting peptide; that stretch reads RAQSDSARNK. Residue asparagine 224 is glycosylated (N-linked (GlcNAc...) asparagine). Residues 226–246 form a helical membrane-spanning segment; that stretch reads TLTGVGGLVLGLIFLAVGLIM. At 247 to 258 the chain is on the cytoplasmic side; the sequence is HVRSKKAQRGSR.

It belongs to the MHC class II family.

The protein localises to the membrane. This Spalax ehrenbergi (Middle East blind mole rat) protein is SMH class II histocompatibility antigen, beta-1 chain.